Reading from the N-terminus, the 503-residue chain is Cytochrome P450 3A25 (503 aa).

Residue Cys442 participates in heme binding.

The protein belongs to the cytochrome P450 family. The cofactor is heme.

Its subcellular location is the endoplasmic reticulum membrane. It localises to the microsome membrane. It carries out the reaction an organic molecule + reduced [NADPH--hemoprotein reductase] + O2 = an alcohol + oxidized [NADPH--hemoprotein reductase] + H2O + H(+). Cytochromes P450 are a group of heme-thiolate monooxygenases. In liver microsomes, this enzyme is involved in an NADPH-dependent electron transport pathway. It oxidizes a variety of structurally unrelated compounds, including steroids, fatty acids, and xenobiotics. The chain is Cytochrome P450 3A25 (Cyp3a25) from Mus musculus (Mouse).